The following is a 556-amino-acid chain: Urocanate hydratase (556 aa).

NAD(+) contacts are provided by residues Gly-52–Gly-53, Gln-130, Gly-176–Gly-178, Glu-196, Arg-201, Asn-242–Ala-243, Gln-263–His-267, Tyr-273–Leu-274, and Tyr-322. Residue Cys-410 is part of the active site. Gly-492 is an NAD(+) binding site.

The protein belongs to the urocanase family. Requires NAD(+) as cofactor.

It is found in the cytoplasm. It carries out the reaction 4-imidazolone-5-propanoate = trans-urocanate + H2O. Its pathway is amino-acid degradation; L-histidine degradation into L-glutamate; N-formimidoyl-L-glutamate from L-histidine: step 2/3. Functionally, catalyzes the conversion of urocanate to 4-imidazolone-5-propionate. The protein is Urocanate hydratase of Shewanella woodyi (strain ATCC 51908 / MS32).